The chain runs to 74 residues: U19-theraphotoxin-Cg1a (74 aa).

The signal sequence occupies residues 1-7 (IMFVWAS). The propeptide occupies 8–36 (AAEVEERGSDQRDSPASLKSMETIFQSEQ). Intrachain disulfides connect Cys39–Cys53, Cys46–Cys58, and Cys52–Cys66.

Belongs to the neurotoxin 10 (Hwtx-1) family. 38 (Jztx-33) subfamily. As to expression, expressed by the venom gland.

The protein resides in the secreted. In terms of biological role, probable ion channel inhibitor. This chain is U19-theraphotoxin-Cg1a, found in Chilobrachys guangxiensis (Chinese earth tiger tarantula).